The sequence spans 84 residues: Antitoxin VapB30 (84 aa).

In terms of biological role, antitoxin component of a type II toxin-antitoxin (TA) system. Upon expression in M.smegmatis neutralizes the effect of cognate toxin VapC30. The protein is Antitoxin VapB30 (vapB30) of Mycobacterium tuberculosis (strain ATCC 25618 / H37Rv).